A 217-amino-acid polypeptide reads, in one-letter code: TLD domain-containing protein 2 (217 aa).

Residues Met-1–Val-48 are disordered. Residues Leu-19–Thr-35 show a composition bias toward acidic residues. Residues Gln-56–Ser-217 form the TLDc domain.

This sequence belongs to the OXR1 family.

In Bos taurus (Bovine), this protein is TLD domain-containing protein 2 (TLDC2).